Consider the following 301-residue polypeptide: Cytosolic sulfotransferase 3 (301 aa).

Residue 53 to 58 (KAGTTW) participates in 3'-phosphoadenylyl sulfate binding. The active-site Proton acceptor is the His115. Residues Arg137, Ser145, Tyr201, 235-240 (VQFDAM), and 263-265 (RKG) each bind 3'-phosphoadenylyl sulfate.

It belongs to the sulfotransferase 1 family.

It is found in the cytoplasm. Inhibited by Hg(2+), Co(2+), Zn(2+), Cd(2+), Cu(2+) and Pb(2+) ions. Activated slightly by Mn(2+), Ca(2+) and Mg(2+) ions. Its function is as follows. Sulfotransferase that utilizes 3'-phospho-5'-adenylyl sulfate (PAPS) as sulfonate donor to catalyze the sulfate conjugation of a variety of xenobiotic and endogenous compounds, including dopamine, T3 (triiodo-L-thyronine), T4 (thyroxine), estrone, DHEA (dehydroepiandrosterone), flavonoids, isoflavonoids and other phenolic compounds. The chain is Cytosolic sulfotransferase 3 from Danio rerio (Zebrafish).